A 376-amino-acid chain; its full sequence is MKIVVDENMPHARELFAEFGEVIPLPGRQMLATDLQEADVLLVRSVTRVDAALLASCPRLSFVGTATIGTDHVDKGLLAERGIPFFSAPGCNKYSVGDYVLSALLVLAERHELNLGAMSLAVIGAGNTGECVAGKAEALGMRVLRCDPPRARAAEANEAAQFVDYQQALEADIVSFHVPITRQGPDATFHLLDAAQIAARPAGQILINASRGEVWDNQALLARQQSQAPLRLVMDVWEGEPEPLQALVPHTELATPHIAGYSLEGKARGTWMLYEALCRQLRRTPRQDLQSLLPIPEVREVTPGQSADQALIKQLVHLIYDVRRDDARFRNRLGVAGSFDEQRKHYPERRELSSLQLKGPFAGAALARLGFVCQPD.

Ser45 and Thr67 together coordinate substrate. Residues Asp147, 209–211 (ASR), and Asp235 contribute to the NAD(+) site. Arg211 is a catalytic residue. Glu240 is an active-site residue. His257 serves as the catalytic Proton donor. Position 260 (Gly260) interacts with NAD(+). Tyr261 contributes to the substrate binding site.

This sequence belongs to the D-isomer specific 2-hydroxyacid dehydrogenase family. PdxB subfamily. As to quaternary structure, homodimer.

Its subcellular location is the cytoplasm. It carries out the reaction 4-phospho-D-erythronate + NAD(+) = (R)-3-hydroxy-2-oxo-4-phosphooxybutanoate + NADH + H(+). Its pathway is cofactor biosynthesis; pyridoxine 5'-phosphate biosynthesis; pyridoxine 5'-phosphate from D-erythrose 4-phosphate: step 2/5. In terms of biological role, catalyzes the oxidation of erythronate-4-phosphate to 3-hydroxy-2-oxo-4-phosphonooxybutanoate. The protein is Erythronate-4-phosphate dehydrogenase of Aeromonas hydrophila subsp. hydrophila (strain ATCC 7966 / DSM 30187 / BCRC 13018 / CCUG 14551 / JCM 1027 / KCTC 2358 / NCIMB 9240 / NCTC 8049).